Reading from the N-terminus, the 443-residue chain is Probable lipase C16A3.12c (443 aa).

At 1-16 (MSGFNKNQIYWGDYVG) the chain is on the cytoplasmic side. The helical; Signal-anchor for type II membrane protein transmembrane segment at 17–37 (VIAAFVGVYTELVARIFIYMI) threads the bilayer. Over 38 to 443 (PERVREWFRV…KHFVKQNGFH (406 aa)) the chain is Lumenal. Residues 116-410 (VVYCHHGLMT…HYEHLDFLWG (295 aa)) form the AB hydrolase-1 domain. Residues asparagine 134 and asparagine 177 are each glycosylated (N-linked (GlcNAc...) asparagine). Serine 210 (nucleophile) is an active-site residue. N-linked (GlcNAc...) asparagine glycosylation is found at asparagine 304 and asparagine 335. Catalysis depends on charge relay system residues aspartate 378 and histidine 404.

Belongs to the AB hydrolase superfamily. Lipase family.

It is found in the cytoplasm. Its subcellular location is the vacuole. It localises to the membrane. Probable lipase. The protein is Probable lipase C16A3.12c of Schizosaccharomyces pombe (strain 972 / ATCC 24843) (Fission yeast).